A 272-amino-acid polypeptide reads, in one-letter code: MMACHC-like protein (272 aa).

Residues Asp-121, 132–135 (ILMQ), and 146–148 (YYQ) each bind substrate.

The protein belongs to the MMACHC family. Requires FAD as cofactor. FMN serves as cofactor.

The protein localises to the cytoplasm. Functionally, catalyzes the reductive dealkylation of cyanocobalamin to cob(II)alamin, using FAD or FMN as cofactor and NADPH as cosubstrate. Can also catalyze the glutathione-dependent reductive demethylation of methylcobalamin, and, with much lower efficiency, the glutathione-dependent reductive demethylation of adenosylcobalamin. Under anaerobic conditions cob(I)alamin is the first product; it is highly reactive and is converted to aquocob(II)alamin in the presence of oxygen. Binds cyanocobalamin, adenosylcobalamin, methylcobalamin and other, related vitamin B12 derivatives. The chain is MMACHC-like protein (cblc-1) from Caenorhabditis elegans.